The chain runs to 184 residues: Interferon alpha-2 (184 aa).

Positions 1–23 (MALPFSLLMALVVLSCHSSCSLG) are cleaved as a signal peptide. 2 cysteine pairs are disulfide-bonded: Cys24/Cys122 and Cys52/Cys162.

This sequence belongs to the alpha/beta interferon family. As to quaternary structure, interacts with IFNAR2.

It localises to the secreted. Its function is as follows. Produced by macrophages, IFN-alpha have antiviral activities. The sequence is that of Interferon alpha-2 from Equus caballus (Horse).